Here is a 134-residue protein sequence, read N- to C-terminus: Complexin-1 (134 aa).

Disordered regions lie at residues 1-60 (MEFV…AERE) and 74-114 (KKEE…EEDE). Positions 15–60 (DMGKMLGGDEEKDPDAAKKEEERQEALRQAEEERKAKYAKMEAERE) are enriched in basic and acidic residues. Positions 29 to 64 (DAAKKEEERQEALRQAEEERKAKYAKMEAEREVMRQ) form a coiled coil. The tract at residues 48–70 (RKAKYAKMEAEREVMRQGIRDKY) is interaction with the SNARE complex.

This sequence belongs to the complexin/synaphin family. Binds to the SNARE core complex containing SNAP25, VAMP2 and STX1A. As to expression, nervous system, and pancreatic islet cells. Present in many brain regions, including hippocampus and cerebellum. In the retina, present at conventional amacrine cell synapses (at protein level).

The protein resides in the cytoplasm. It localises to the cytosol. Its subcellular location is the perikaryon. The protein localises to the presynapse. Functionally, positively regulates a late step in exocytosis of various cytoplasmic vesicles, such as synaptic vesicles and other secretory vesicles. Organizes the SNAREs into a cross-linked zigzag topology that, when interposed between the vesicle and plasma membranes, is incompatible with fusion, thereby preventing SNAREs from releasing neurotransmitters until an action potential arrives at the synapse. Also involved in glucose-induced secretion of insulin by pancreatic beta-cells. Essential for motor behavior. In Mus musculus (Mouse), this protein is Complexin-1 (Cplx1).